A 2196-amino-acid polypeptide reads, in one-letter code: Genome polyprotein (2196 aa).

Gly2 carries the N-myristoyl glycine; by host lipid modification. Over 2-1506 the chain is Cytoplasmic; the sequence is GAQVSTQKTG…HVSRAFICLQ (1505 aa). Positions 568–584 are amphipathic alpha-helix; the sequence is DLQGDSEHAVESAVSRV. Residues His883 and Asp901 each act as for protease 2A activity in the active site. The Zn(2+) site is built by Cys918 and Cys920. The active-site For protease 2A activity is Cys972. Residues Cys978 and His980 each coordinate Zn(2+). The tract at residues 1112-1184 is membrane-binding; that stretch reads NNGWLKKFTE…EQSAPSQSDQ (73 aa). The tract at residues 1112-1250 is oligomerization; sequence NNGWLKKFTE…SPGAGKSVAT (139 aa). The segment at 1133–1137 is RNA-binding; the sequence is AIKIQ. Positions 1216 to 1372 constitute an SF3 helicase domain; the sequence is EKKMSNYIQF…SMYSQNGKIN (157 aa). Zn(2+) is bound by residues Cys1380, Cys1392, and Cys1397. The C4-type; degenerate zinc finger occupies 1380–1397; it reads CDEECCPVNFKKCCPLVC. Residues 1424–1431 are RNA-binding; sequence EYNHRHSV. Residues 1435-1440 form an oligomerization region; sequence LEALFQ. Residues 1507 to 1522 lie within the membrane without spanning it; the sequence is ALTTFVSVAGIIYIIY. The Cytoplasmic segment spans residues 1523 to 2196; sequence KLFAGFQGAY…TLRRKWLDSF (674 aa). The residue at position 1532 (Tyr1532) is an O-(5'-phospho-RNA)-tyrosine. In terms of domain architecture, Peptidase C3 spans 1552–1730; the sequence is GPAFEFAVAM…FSAALLKHYF (179 aa). Residues His1591, Glu1622, and Cys1698 each act as for protease 3C activity in the active site. Positions 1961–2077 constitute a RdRp catalytic domain; that stretch reads GHLIAFDYSG…SYPWPIDASL (117 aa). Residues Asp1967 and Asp2063 each contribute to the Mg(2+) site.

The protein belongs to the picornaviruses polyprotein family. As to quaternary structure, interacts with capsid protein VP1 and capsid protein VP3 to form heterotrimeric protomers. In terms of assembly, interacts with capsid protein VP0, and capsid protein VP3 to form heterotrimeric protomers. Five protomers subsequently associate to form pentamers which serve as building blocks for the capsid. Interacts with capsid protein VP2, capsid protein VP3 and capsid protein VP4 following cleavage of capsid protein VP0. Interacts with capsid protein VP1 and capsid protein VP3 in the mature capsid. As to quaternary structure, interacts with capsid protein VP0 and capsid protein VP1 to form heterotrimeric protomers. Five protomers subsequently associate to form pentamers which serve as building blocks for the capsid. Interacts with capsid protein VP4 in the mature capsid. Interacts with protein 2C; this interaction may be important for virion morphogenesis. In terms of assembly, interacts with capsid protein VP1 and capsid protein VP3. Homodimer. As to quaternary structure, homohexamer; forms a hexameric ring structure with 6-fold symmetry characteristic of AAA+ ATPases. Interacts (via N-terminus) with host RTN3 (via reticulon domain); this interaction is important for viral replication. Interacts with capsid protein VP3; this interaction may be important for virion morphogenesis. In terms of assembly, interacts with protein 3CD. Homodimer. Interacts with host GBF1. Interacts (via GOLD domain) with host ACBD3 (via GOLD domain); this interaction allows the formation of a viral protein 3A/ACBD3 heterotetramer with a 2:2 stoichiometry, which will stimulate the recruitment of host PI4KB in order to synthesize PI4P at the viral RNA replication sites. As to quaternary structure, interacts with RNA-directed RNA polymerase. In terms of assembly, interacts with protein 3AB and with RNA-directed RNA polymerase. Interacts with Viral protein genome-linked and with protein 3CD. Requires Mg(2+) as cofactor. Post-translationally, specific enzymatic cleavages in vivo by the viral proteases yield processing intermediates and the mature proteins. Myristoylation is required for the formation of pentamers during virus assembly. Further assembly of 12 pentamers and a molecule of genomic RNA generates the provirion. In terms of processing, during virion maturation, immature virions are rendered infectious following cleavage of VP0 into VP4 and VP2. This maturation seems to be an autocatalytic event triggered by the presence of RNA in the capsid and it is followed by a conformational change infectious virion. Post-translationally, myristoylation is required during RNA encapsidation and formation of the mature virus particle. VPg is uridylylated by the polymerase into VPg-pUpU. This acts as a nucleotide-peptide primer for the genomic RNA replication.

It localises to the virion. Its subcellular location is the host cytoplasm. It is found in the host cytoplasmic vesicle membrane. The protein localises to the host nucleus. It catalyses the reaction a ribonucleoside 5'-triphosphate + H2O = a ribonucleoside 5'-diphosphate + phosphate + H(+). It carries out the reaction Selective cleavage of Tyr-|-Gly bond in the picornavirus polyprotein.. The catalysed reaction is RNA(n) + a ribonucleoside 5'-triphosphate = RNA(n+1) + diphosphate. The enzyme catalyses Selective cleavage of Gln-|-Gly bond in the poliovirus polyprotein. In other picornavirus reactions Glu may be substituted for Gln, and Ser or Thr for Gly.. Replication or transcription is subject to high level of random mutations by the nucleotide analog ribavirin. In terms of biological role, forms an icosahedral capsid of pseudo T=3 symmetry with capsid proteins VP2 and VP3. The capsid is 300 Angstroms in diameter, composed of 60 copies of each capsid protein and enclosing the viral positive strand RNA genome. Capsid protein VP1 mainly forms the vertices of the capsid. Capsid protein VP1 interacts with host cell receptor to provide virion attachment to target host cells. This attachment induces virion internalization. Tyrosine kinases are probably involved in the entry process. After binding to its receptor, the capsid undergoes conformational changes. Capsid protein VP1 N-terminus (that contains an amphipathic alpha-helix) and capsid protein VP4 are externalized. Together, they shape a pore in the host membrane through which viral genome is translocated to host cell cytoplasm. Functionally, forms an icosahedral capsid of pseudo T=3 symmetry with capsid proteins VP2 and VP3. The capsid is 300 Angstroms in diameter, composed of 60 copies of each capsid protein and enclosing the viral positive strand RNA genome. Lies on the inner surface of the capsid shell. After binding to the host receptor, the capsid undergoes conformational changes. Capsid protein VP4 is released, Capsid protein VP1 N-terminus is externalized, and together, they shape a pore in the host membrane through which the viral genome is translocated into the host cell cytoplasm. Its function is as follows. Component of immature procapsids, which is cleaved into capsid proteins VP4 and VP2 after maturation. Allows the capsid to remain inactive before the maturation step. In terms of biological role, cysteine protease that cleaves viral polyprotein and specific host proteins. It is responsible for the autocatalytic cleavage between the P1 and P2 regions, which is the first cleavage occurring in the polyprotein. Also cleaves the host translation initiation factor EIF4G1, in order to shut down the capped cellular mRNA translation. Inhibits the host nucleus-cytoplasm protein and RNA trafficking by cleaving host members of the nuclear pores. Counteracts stress granule formation probably by antagonizing its assembly or promoting its dissassembly. Functionally, plays an essential role in the virus replication cycle by acting as a viroporin. Creates a pore in the host endoplasmic reticulum and as a consequence releases Ca2+ in the cytoplasm of infected cell. In turn, high levels of cytoplasmic calcium may trigger membrane trafficking and transport of viral ER-associated proteins to viroplasms, sites of viral genome replication. Induces and associates with structural rearrangements of intracellular membranes. Displays RNA-binding, nucleotide binding and NTPase activities. May play a role in virion morphogenesis and viral RNA encapsidation by interacting with the capsid protein VP3. Its function is as follows. Localizes the viral replication complex to the surface of membranous vesicles. Together with protein 3CD binds the Cis-Active RNA Element (CRE) which is involved in RNA synthesis initiation. Acts as a cofactor to stimulate the activity of 3D polymerase, maybe through a nucleid acid chaperone activity. In terms of biological role, localizes the viral replication complex to the surface of membranous vesicles. It inhibits host cell endoplasmic reticulum-to-Golgi apparatus transport and causes the disassembly of the Golgi complex, possibly through GBF1 interaction. This would result in depletion of MHC, trail receptors and IFN receptors at the host cell surface. Plays an essential role in viral RNA replication by recruiting ACBD3 and PI4KB at the viral replication sites, thereby allowing the formation of the rearranged membranous structures where viral replication takes place. Functionally, acts as a primer for viral RNA replication and remains covalently bound to viral genomic RNA. VPg is uridylylated prior to priming replication into VPg-pUpU. The oriI viral genomic sequence may act as a template for this. The VPg-pUpU is then used as primer on the genomic RNA poly(A) by the RNA-dependent RNA polymerase to replicate the viral genome. During genome replication, the VPg-RNA linkage is removed by the host TDP2, thereby accelerating replication. During the late stage of the replication cycle, host TDP2 is excluded from sites of viral RNA synthesis and encapsidation, allowing for the generation of progeny virions. Involved in the viral replication complex and viral polypeptide maturation. It exhibits protease activity with a specificity and catalytic efficiency that is different from protease 3C. Protein 3CD lacks polymerase activity. Protein 3CD binds to the 5'UTR of the viral genome. Its function is as follows. Replicates the viral genomic RNA on the surface of intracellular membranes. May form linear arrays of subunits that propagate along a strong head-to-tail interaction called interface-I. Covalently attaches UMP to a tyrosine of VPg, which is used to prime RNA synthesis. The positive stranded RNA genome is first replicated at virus induced membranous vesicles, creating a dsRNA genomic replication form. This dsRNA is then used as template to synthesize positive stranded RNA genomes. ss(+)RNA genomes are either translated, replicated or encapsidated. In terms of biological role, major viral protease that mediates proteolytic processing of the polyprotein. Cleaves host EIF5B, contributing to host translation shutoff. Also cleaves host PABPC1, contributing to host translation shutoff. Cleaves host NLRP1, triggers host N-glycine-mediated degradation of the autoinhibitory NLRP1 N-terminal fragment. This Homo sapiens (Human) protein is Genome polyprotein.